The primary structure comprises 222 residues: C-reactive protein (222 aa).

The N-terminal stretch at 1 to 19 (MEKLSLCLLVIISLSNAFA) is a signal peptide. A Pyrrolidone carboxylic acid modification is found at Gln20. The 199-residue stretch at 24 to 222 (IGKAFVFPKE…EVYVKPQLWP (199 aa)) folds into the Pentraxin (PTX) domain. A disulfide bridge links Cys55 with Cys113. Positions 78, 154, 155, 156, and 166 each coordinate Ca(2+).

This sequence belongs to the pentraxin family. As to quaternary structure, homopentamer. Pentraxin (or pentaxin) have a discoid arrangement of 5 non-covalently bound subunits. Interacts with FCN1; may regulate monocyte activation by FCN1. It depends on Ca(2+) as a cofactor. In terms of tissue distribution, found in plasma.

The protein localises to the secreted. Displays several functions associated with host defense: it promotes agglutination, bacterial capsular swelling, phagocytosis and complement fixation through its calcium-dependent binding to phosphorylcholine. Can interact with DNA and histones and may scavenge nuclear material released from damaged circulating cells. The protein is C-reactive protein (CRP) of Sus scrofa (Pig).